The primary structure comprises 496 residues: 3-octaprenyl-4-hydroxybenzoate carboxy-lyase (496 aa).

Asparagine 181 serves as a coordination point for Mn(2+). Prenylated FMN-binding positions include 184–186, 198–200, and 203–204; these read IYR, RWL, and RG. Glutamate 247 serves as a coordination point for Mn(2+). Aspartate 296 serves as the catalytic Proton donor.

The protein belongs to the UbiD family. Homohexamer. The cofactor is prenylated FMN. It depends on Mn(2+) as a cofactor.

It localises to the cell membrane. The catalysed reaction is a 4-hydroxy-3-(all-trans-polyprenyl)benzoate + H(+) = a 2-(all-trans-polyprenyl)phenol + CO2. Its pathway is cofactor biosynthesis; ubiquinone biosynthesis. Functionally, catalyzes the decarboxylation of 3-octaprenyl-4-hydroxy benzoate to 2-octaprenylphenol, an intermediate step in ubiquinone biosynthesis. The sequence is that of 3-octaprenyl-4-hydroxybenzoate carboxy-lyase from Azoarcus sp. (strain BH72).